Here is a 1230-residue protein sequence, read N- to C-terminus: Serine/threonine-protein kinase PDK1 (1230 aa).

Positions 1 to 277 (MASSHFGPAS…ASSGALKKHS (277 aa)) are disordered. Positions 34–50 (SSSSSSRSTTTCSSTSS) are enriched in low complexity. Residues 62–76 (ETSTAATSRSQLPSN) are compositionally biased toward polar residues. A compositionally biased stretch (basic and acidic residues) spans 77-87 (RHSENEAEHDT). 2 stretches are compositionally biased toward polar residues: residues 107-117 (PRSNRLGTSPQ) and 140-175 (SKRQ…SSTI). The segment covering 185–202 (PNDRLSHDRESHSAERPR) has biased composition (basic and acidic residues). Residues 217 to 226 (STPSSPTNSY) show a composition bias toward polar residues. Residues 252 to 262 (ARDGDDRERRQ) are compositionally biased toward basic and acidic residues. In terms of domain architecture, Protein kinase spans 281–801 (WVLGEELGVG…ITFIKTHPFF (521 aa)). ATP is bound by residues 291-293 (SYS) and Lys319. Disordered stretches follow at residues 345 to 522 (LSDP…RSGA) and 534 to 597 (TLPP…KMSA). Composition is skewed to polar residues over residues 378 to 397 (TASI…TVSN) and 408 to 433 (IVTT…SPTA). 2 stretches are compositionally biased toward basic and acidic residues: residues 466–494 (GGED…DNMT) and 502–521 (VREE…ERSG). Pro residues predominate over residues 535-544 (LPPPQIPSTP). A compositionally biased stretch (basic and acidic residues) spans 555 to 569 (DGHRTSRETPRDRPH). Residues 621–623 (SLA) and Glu627 contribute to the ATP site. Asp666 serves as the catalytic Proton acceptor. Residues Glu670 and Asp684 each contribute to the ATP site. Residues 850 to 859 (EDEDGFEYDA) are compositionally biased toward acidic residues. Disordered stretches follow at residues 850-871 (EDED…GGAV), 907-955 (LGED…GGNR), 972-1035 (GGGM…SDEA), and 1116-1152 (EADG…GGGH). Over residues 927–942 (GKREKEVEKKKGEKAR) the composition is skewed to basic and acidic residues. Low complexity-rich tracts occupy residues 977–992 (GSAT…RTPG), 1002–1030 (RPGS…GASM), and 1120–1137 (DPAG…SHVE). Residues 1138–1152 (SGGGGVGGGGRGGGH) show a composition bias toward gly residues.

Belongs to the protein kinase superfamily. AGC Ser/Thr protein kinase family. PDPK1 subfamily.

The catalysed reaction is L-seryl-[protein] + ATP = O-phospho-L-seryl-[protein] + ADP + H(+). It catalyses the reaction L-threonyl-[protein] + ATP = O-phospho-L-threonyl-[protein] + ADP + H(+). In terms of biological role, serine/threonine-protein kinase that functions in the sphingolipid-mediated signaling pathway, regulating organization of the plasma membrane. May phosphorylate PKC1 to activate the cell integrity MAPK cascade during cell wall and membrane stress. May regulate sphingolipid metabolism upstream of YPK1. The sequence is that of Serine/threonine-protein kinase PDK1 from Cryptococcus neoformans var. grubii serotype A (strain H99 / ATCC 208821 / CBS 10515 / FGSC 9487) (Filobasidiella neoformans var. grubii).